The following is a 243-amino-acid chain: Probable transcriptional regulatory protein PTH_1024 (243 aa).

It belongs to the TACO1 family.

Its subcellular location is the cytoplasm. This Pelotomaculum thermopropionicum (strain DSM 13744 / JCM 10971 / SI) protein is Probable transcriptional regulatory protein PTH_1024.